Consider the following 179-residue polypeptide: Ribosome-recycling factor (179 aa).

The protein belongs to the RRF family.

The protein resides in the cytoplasm. Functionally, responsible for the release of ribosomes from messenger RNA at the termination of protein biosynthesis. May increase the efficiency of translation by recycling ribosomes from one round of translation to another. In Chlamydia trachomatis serovar D (strain ATCC VR-885 / DSM 19411 / UW-3/Cx), this protein is Ribosome-recycling factor.